Reading from the N-terminus, the 460-residue chain is MKKIIIALFFAPFFTHATTDAECLSKPAFDGTLSNVWKEGDSRYANFENCIYELSGIGIGYDNDTSCNGHWTPVRAADGSGNGGDDNSSGGGSNGDSGNNSTPDTVTPGQTVNLPSDLSTLSIPANVVKSDSIGSQFSLYTNASCTMCSGYYLSNNADSIAIANITETVKADYNQPDMWFEQTDSDGNHVKILQNSYKAVSYNVESKQSDVNNPTYINYSYSVNVKQVSYDTSNVCIMNWETFQNKCDASRAVLITDTVTPSYSRNITIQSNINYQGSNGSGGSGGSGGSGNDGGGTGNNGNGTGDFDYVKMANANKDALTESFDLSALQADTGASLDGSVQGTLDSLSGFSDSIGGLVGNGSAISGEFAGSSAAMNAIGEGDKSPLLDSLSFLKDGLFPALPEFKQCTPFVFAPGKEYEFIIECKYIDMFKGIFAFILYFWTFVTVYDSFSGILRKGRG.

The first 16 residues, 1 to 16 (MKKIIIALFFAPFFTH), serve as a signal peptide directing secretion. Positions 18-79 (TTDAECLSKP…HWTPVRAADG (62 aa)) are N1. Residues Cys23 and Cys50 are joined by a disulfide bond. The disordered stretch occupies residues 76-115 (AADGSGNGGDDNSSGGGSNGDSGNNSTPDTVTPGQTVNLP). Gly residues predominate over residues 80-95 (SGNGGDDNSSGGGSNG). The G1 (Gly-rich linker) stretch occupies residues 80-100 (SGNGGDDNSSGGGSNGDSGNN). The segment covering 102-115 (TPDTVTPGQTVNLP) has biased composition (polar residues). An N2 region spans residues 184–249 (DSDGNHVKIL…WETFQNKCDA (66 aa)). Positions 277–300 (GSNGSGGSGGSGGSGNDGGGTGNN) are disordered. Positions 279-300 (NGSGGSGGSGGSGNDGGGTGNN) are enriched in gly residues. Residues 306-460 (DFDYVKMANA…FSGILRKGRG (155 aa)) are CT. The helical transmembrane segment at 434 to 454 (IFAFILYFWTFVTVYDSFSGI) threads the bilayer.

It belongs to the inovirus G3P protein family. As to quaternary structure, interacts with G6P; this interaction is required for proper integration of G3P and G6P into the virion. Interacts with G8P. Interacts with the tip of the host pilus. Interacts (via N-terminus) with host TolA.

Its subcellular location is the virion. The protein localises to the host membrane. In terms of biological role, plays essential roles both in the penetration of the viral genome into the bacterial host via pilus retraction and in the extrusion process. During the initial step of infection, G3P mediates adsorption of the phage to its primary receptor, the tip of host I-pilus. Attachment of the phage causes pilus retraction bringing the viral particle into close proximity of the host cell inner membrane. Subsequent interaction with the host entry receptors TolA and penetration of the viral DNA into the host cytoplasm. In the extrusion process, G3P mediates the release of the membrane-anchored virion from the cell via its C-terminal domain. This is Attachment protein G3P (III) from Escherichia coli (Bacteriophage If1).